Reading from the N-terminus, the 154-residue chain is Ribosome maturation factor RimP (154 aa).

This sequence belongs to the RimP family.

It is found in the cytoplasm. In terms of biological role, required for maturation of 30S ribosomal subunits. This Salmonella gallinarum (strain 287/91 / NCTC 13346) protein is Ribosome maturation factor RimP.